Here is a 500-residue protein sequence, read N- to C-terminus: ATP synthase subunit beta (500 aa).

Residue 157–164 (GGAGVGKT) coordinates ATP.

This sequence belongs to the ATPase alpha/beta chains family. In terms of assembly, F-type ATPases have 2 components, CF(1) - the catalytic core - and CF(0) - the membrane proton channel. CF(1) has five subunits: alpha(3), beta(3), gamma(1), delta(1), epsilon(1). CF(0) has three main subunits: a(1), b(2) and c(9-12). The alpha and beta chains form an alternating ring which encloses part of the gamma chain. CF(1) is attached to CF(0) by a central stalk formed by the gamma and epsilon chains, while a peripheral stalk is formed by the delta and b chains.

The protein localises to the cell inner membrane. It carries out the reaction ATP + H2O + 4 H(+)(in) = ADP + phosphate + 5 H(+)(out). Functionally, produces ATP from ADP in the presence of a proton gradient across the membrane. The catalytic sites are hosted primarily by the beta subunits. This is ATP synthase subunit beta from Salinibacter ruber (strain DSM 13855 / M31).